A 223-amino-acid polypeptide reads, in one-letter code: Uracil-DNA glycosylase (223 aa).

D66 serves as the catalytic Proton acceptor.

It belongs to the uracil-DNA glycosylase (UDG) superfamily. UNG family.

The protein localises to the cytoplasm. The enzyme catalyses Hydrolyzes single-stranded DNA or mismatched double-stranded DNA and polynucleotides, releasing free uracil.. In terms of biological role, excises uracil residues from the DNA which can arise as a result of misincorporation of dUMP residues by DNA polymerase or due to deamination of cytosine. The protein is Uracil-DNA glycosylase of Sulfurimonas denitrificans (strain ATCC 33889 / DSM 1251) (Thiomicrospira denitrificans (strain ATCC 33889 / DSM 1251)).